Here is a 201-residue protein sequence, read N- to C-terminus: Recombination protein RecR (201 aa).

Residues 57–72 (CKLCQIYTEQPLCNIC) form a C4-type zinc finger. The Toprim domain occupies 80–175 (TLLCVVESPA…KCSRIAHGVP (96 aa)).

The protein belongs to the RecR family.

Functionally, may play a role in DNA repair. It seems to be involved in an RecBC-independent recombinational process of DNA repair. It may act with RecF and RecO. This chain is Recombination protein RecR, found in Coxiella burnetii (strain RSA 493 / Nine Mile phase I).